We begin with the raw amino-acid sequence, 275 residues long: uncharacterized protein (275 aa).

Positions 171–268 (KMVCEFLEEH…GLTPKQYMKI (98 aa)) constitute an HTH araC/xylS-type domain. 2 DNA-binding regions (H-T-H motif) span residues 188-209 (NDLS…TKQK) and 235-258 (PIDA…KRQV).

This is an uncharacterized protein from Bacillus subtilis (strain 168).